A 347-amino-acid chain; its full sequence is GTPase Obg (347 aa).

Residues 1–159 (MKFVDEATIK…RVLRLELKLL (159 aa)) form the Obg domain. Residues 127 to 146 (NTRYKTSTNRAPRQSKPGTP) are disordered. Over residues 129–138 (RYKTSTNRAP) the composition is skewed to polar residues. The OBG-type G domain occupies 160–334 (ADVGLLGLPN…LMQAIMKYLE (175 aa)). GTP-binding positions include 166–173 (GLPNAGKS), 191–195 (FTTLY), 213–216 (DIPG), 284–287 (NKID), and 315–317 (SAA). 2 residues coordinate Mg(2+): Ser173 and Thr193.

Belongs to the TRAFAC class OBG-HflX-like GTPase superfamily. OBG GTPase family. In terms of assembly, monomer. The cofactor is Mg(2+).

It localises to the cytoplasm. Functionally, an essential GTPase which binds GTP, GDP and possibly (p)ppGpp with moderate affinity, with high nucleotide exchange rates and a fairly low GTP hydrolysis rate. Plays a role in control of the cell cycle, stress response, ribosome biogenesis and in those bacteria that undergo differentiation, in morphogenesis control. The protein is GTPase Obg of Thioalkalivibrio sulfidiphilus (strain HL-EbGR7).